The chain runs to 251 residues: uncharacterized protein (251 aa).

The protein to M.jannaschii MJ1311.

This is an uncharacterized protein from Methanocaldococcus jannaschii (strain ATCC 43067 / DSM 2661 / JAL-1 / JCM 10045 / NBRC 100440) (Methanococcus jannaschii).